A 458-amino-acid chain; its full sequence is ATP synthase subunit beta (458 aa).

148–155 is an ATP binding site; it reads GGAGVGKT.

It belongs to the ATPase alpha/beta chains family. F-type ATPases have 2 components, CF(1) - the catalytic core - and CF(0) - the membrane proton channel. CF(1) has five subunits: alpha(3), beta(3), gamma(1), delta(1), epsilon(1). CF(0) has three main subunits: a(1), b(2) and c(9-12). The alpha and beta chains form an alternating ring which encloses part of the gamma chain. CF(1) is attached to CF(0) by a central stalk formed by the gamma and epsilon chains, while a peripheral stalk is formed by the delta and b chains.

The protein localises to the cell inner membrane. It catalyses the reaction ATP + H2O + 4 H(+)(in) = ADP + phosphate + 5 H(+)(out). Its function is as follows. Produces ATP from ADP in the presence of a proton gradient across the membrane. The catalytic sites are hosted primarily by the beta subunits. The sequence is that of ATP synthase subunit beta from Shewanella piezotolerans (strain WP3 / JCM 13877).